The primary structure comprises 178 residues: Bifunctional protein PyrR (178 aa).

The PRPP-binding motif lies at Val-99 to Thr-111.

The protein belongs to the purine/pyrimidine phosphoribosyltransferase family. PyrR subfamily. In terms of assembly, homodimer and homohexamer; in equilibrium.

The enzyme catalyses UMP + diphosphate = 5-phospho-alpha-D-ribose 1-diphosphate + uracil. In terms of biological role, regulates transcriptional attenuation of the pyrimidine nucleotide (pyr) operon by binding in a uridine-dependent manner to specific sites on pyr mRNA. This disrupts an antiterminator hairpin in the RNA and favors formation of a downstream transcription terminator, leading to a reduced expression of downstream genes. Also displays a weak uracil phosphoribosyltransferase activity which is not physiologically significant. This chain is Bifunctional protein PyrR, found in Thermoanaerobacter pseudethanolicus (strain ATCC 33223 / 39E) (Clostridium thermohydrosulfuricum).